A 121-amino-acid polypeptide reads, in one-letter code: Basic phospholipase A2 VRV-PL-VIIIa (121 aa).

Intrachain disulfides connect Cys-26–Cys-115, Cys-28–Cys-44, Cys-43–Cys-95, Cys-49–Cys-121, Cys-50–Cys-88, Cys-57–Cys-81, and Cys-75–Cys-86. Ca(2+)-binding residues include Tyr-27, Gly-29, and Gly-31. Residue His-47 is part of the active site. Asp-48 serves as a coordination point for Ca(2+). Residue Asp-89 is part of the active site.

The protein belongs to the phospholipase A2 family. Group II subfamily. D49 sub-subfamily. Monomer. Ca(2+) is required as a cofactor. Expressed by the venom gland.

It is found in the secreted. It catalyses the reaction a 1,2-diacyl-sn-glycero-3-phosphocholine + H2O = a 1-acyl-sn-glycero-3-phosphocholine + a fatty acid + H(+). Its activity is regulated as follows. Oxyphenbutazone (OPB), anisic acid and atropine inhibit the enzymatic activity by binding at the substrate-binding site. P-coumaric acid, resveratrol, spermidine, corticosterone and gramine derivative inhibit the enzymatic activity by binding at the substrate-binding site. Snake venom phospholipase A2 (PLA2) that shows weak neurotoxicity and medium anticoagulant effects by binding to factor Xa (F10) and inhibiting the prothrombinase activity (IC(50) is 130 nM). It also damages vital organs such as lung, liver and kidney, displays edema-inducing activities when injected into the foot pads of mice and induces necrosis of muscle cells when injected into the thigh muscle. Has a low enzymatic activity. PLA2 catalyzes the calcium-dependent hydrolysis of the 2-acyl groups in 3-sn-phosphoglycerides. The polypeptide is Basic phospholipase A2 VRV-PL-VIIIa (Daboia russelii (Russel's viper)).